Consider the following 1041-residue polypeptide: Nuclear migration protein unc-83 (1041 aa).

Disordered stretches follow at residues 258–283 (VGHL…TETV), 453–498 (IHGQ…LEDD), and 613–646 (IRNR…DSIS). The span at 456–465 (QKKPLRRASR) shows a compositional bias: basic residues. Positions 613–626 (IRNRDSDTAPEHSD) are enriched in basic and acidic residues. Coiled coils occupy residues 785 to 816 (RSKE…DLLA) and 931 to 951 (KAEL…FNDM). Positions 986–1041 (TENEPLTIAEAISSSRLIKFTFALSLLAALAAIFYYHVFGKPFGPHVTYVNGPPPV) constitute a KASH domain. The helical; Anchor for type IV membrane protein transmembrane segment at 1005-1024 (FTFALSLLAALAAIFYYHVF) threads the bilayer.

In terms of assembly, component of the unc-83-unc-84 LINC complex which contains at least unc-83 and unc-84. Within the unc-83-unc-84 LINC complex interacts with unc-84 (via C-terminus); the interaction is probably required to recruit unc-83 to the nuclear envelope where it then recruits dynein and kinesin-1 complexes to regulate nuclear migration. Interacts with bicd-1 and dlc-1. Interacts with nud-2 (via C-terminus); the interaction is direct, and is required for recruitment of nud-2 to the nuclear envelope. Interacts with klc-2; the interaction is direct. As to expression, predominantly expressed in migratory nuclei. Expressed in a variety of cell-types, including cells around the pharynx and in the uterus.

It is found in the nucleus membrane. The protein localises to the nucleus outer membrane. Its function is as follows. Cargo-specific adapter that is involved in nuclear migration during development and thereafter. Component of the unc-83-unc-84 LINC (LInker of Nucleoskeleton and Cytoskeleton) complex where it interacts with unc-84 to form a bridge connecting the nuclear envelope to the cytoskeleton which allows for nuclear transport along microtubules. Within the complex, connects the nuclear envelope to the microtubule cytoskeleton through the kinesin-1 light chain protein klc-2 (most likely within the Kinesin 1 motor complex) to regulate nuclear migrations. Moreover, within the complex, also recruits the large microtubule-associated bicd-1-dlc-1-egal-1 and lis-1-nud-2 complexes to the nuclear envelope to regulate both the bidirectional migration of nuclei and the extent of nuclear migrations. Not required for centrosome attachment to the nucleus. The protein is Nuclear migration protein unc-83 of Caenorhabditis elegans.